A 428-amino-acid polypeptide reads, in one-letter code: 3-phosphoshikimate 1-carboxyvinyltransferase (428 aa).

3-phosphoshikimate is bound by residues Lys23, Ser24, and Arg28. Lys23 serves as a coordination point for phosphoenolpyruvate. Phosphoenolpyruvate-binding residues include Gly97 and Arg125. Residues Ser170, Ser171, Gln172, Ser198, Asp314, Asn337, and Lys341 each contribute to the 3-phosphoshikimate site. Gln172 is a binding site for phosphoenolpyruvate. Asp314 acts as the Proton acceptor in catalysis. Residues Arg345, Arg387, and Lys412 each contribute to the phosphoenolpyruvate site.

The protein belongs to the EPSP synthase family. As to quaternary structure, monomer.

The protein localises to the cytoplasm. The catalysed reaction is 3-phosphoshikimate + phosphoenolpyruvate = 5-O-(1-carboxyvinyl)-3-phosphoshikimate + phosphate. Its pathway is metabolic intermediate biosynthesis; chorismate biosynthesis; chorismate from D-erythrose 4-phosphate and phosphoenolpyruvate: step 6/7. Its function is as follows. Catalyzes the transfer of the enolpyruvyl moiety of phosphoenolpyruvate (PEP) to the 5-hydroxyl of shikimate-3-phosphate (S3P) to produce enolpyruvyl shikimate-3-phosphate and inorganic phosphate. The chain is 3-phosphoshikimate 1-carboxyvinyltransferase from Cronobacter sakazakii (strain ATCC BAA-894) (Enterobacter sakazakii).